Reading from the N-terminus, the 599-residue chain is mRNA export factor MEX67 (599 aa).

The residue at position 2 (serine 2) is an N-acetylserine. LRR repeat units follow at residues 163 to 184 (IVES…STLA) and 189 to 210 (NLKN…EVWK). The region spanning 224–262 (NPITTDKLYRTEMLRLFPKLVVLDNVIVRDEQKLQTVYS) is the LRRCT domain. Positions 280-467 (SSTDFATNFL…VIIASDLLTV (188 aa)) constitute an NTF2 domain. The disordered stretch occupies residues 408–439 (KPELESNKKTGKNNYQKNRRYNHGYNSTSNNK). Residues 546 to 599 (PVQLELLNKLHLETKLNAEYTFMLAEQSNWNYEVAIKGFQSSMNGIPREAFVQF) enclose the TAP-C domain.

Belongs to the NXF family. Interacts with nucleoporin complex NUP84 and MTR2. Interacts with MIP6.

The protein localises to the nucleus. It is found in the cytoplasm. Functionally, involved in the export of mRNA from the nucleus to the cytoplasm. This is mRNA export factor MEX67 (MEX67) from Saccharomyces cerevisiae (strain ATCC 204508 / S288c) (Baker's yeast).